We begin with the raw amino-acid sequence, 350 residues long: Inhibitor of nuclear factor kappa-B kinase-interacting protein (350 aa).

The span at 1–11 (MSEVKSRKKSG) shows a compositional bias: basic residues. Residues 1 to 39 (MSEVKSRKKSGPKGAPAAEPGKRSEGGKTPVARSSGGGG) form a disordered region. Residues 46-62 (CLSLLSLGTCLGLAWFV) traverse the membrane as a helical segment. Residue N144 is glycosylated (N-linked (GlcNAc...) asparagine). Residues 184 to 217 (GLVTDVISLTDSVQELENKIEKVEKNTVKNIGDL) adopt a coiled-coil conformation. N328 is a glycosylation site (N-linked (GlcNAc...) asparagine).

N-glycosylated. Isoform 4 is glycosylated at Asn-154. In terms of tissue distribution, expressed in vein endothelial cells. Isoform 4 is expressed in lung, kidney, spleen, thymus and skeletal muscle.

The protein resides in the endoplasmic reticulum membrane. Its function is as follows. Target of p53/TP53 with pro-apoptotic function. This chain is Inhibitor of nuclear factor kappa-B kinase-interacting protein (IKBIP), found in Homo sapiens (Human).